We begin with the raw amino-acid sequence, 613 residues long: Na(+)/H(+) antiporter NhaA 1 (613 aa).

Positions 1–24 (MTEASARTIGPLPSRFSRDPKTPR) are disordered. The segment at 1–408 (MTEASARTIG…DPARQDEARV (408 aa)) is na(+)/H(+) antiporter NhaA. The next 11 membrane-spanning stretches (helical) occupy residues 29-49 (AAAALLLAFTVLAILWANSPW), 81-101 (GLMAFFFFIVGLEVKSEFVIG), 110-130 (AVPVVAAIAGLIVPAVIFLTF), 138-158 (QAWGVVISTDTAFLVGALAVI), 168-188 (IFLLTLAVVDDVGALGAIALF), 191-211 (DDLKLAPLAVAALLIAALAMV), 231-251 (IALYLAHVHPTLAGVAVAVLI), 300-320 (AVGPYVSFVVLPIFALANAGV), 337-357 (WGIVAGLVVGKFVGITAATAL), 377-397 (GGAALSGIGFTISLFIVDVAI), and 408-428 (VGVLIASVLAFTLSWALFRIT). In terms of domain architecture, Thioredoxin spans 409–613 (GVLIASVLAF…SLIRALEAGR (205 aa)).

It in the N-terminal section; belongs to the NhaA Na(+)/H(+) (TC 2.A.33) antiporter family.

The protein resides in the cell membrane. The catalysed reaction is Na(+)(in) + 2 H(+)(out) = Na(+)(out) + 2 H(+)(in). Its function is as follows. Na(+)/H(+) antiporter that extrudes sodium in exchange for external protons. This chain is Na(+)/H(+) antiporter NhaA 1, found in Mycobacterium sp. (strain JLS).